The sequence spans 149 residues: Large ribosomal subunit protein bL9 (149 aa).

The protein belongs to the bacterial ribosomal protein bL9 family.

Functionally, binds to the 23S rRNA. The polypeptide is Large ribosomal subunit protein bL9 (Synechococcus sp. (strain JA-2-3B'a(2-13)) (Cyanobacteria bacterium Yellowstone B-Prime)).